The chain runs to 204 residues: Recombination protein RecR (204 aa).

Residues 61 to 76 form a C4-type zinc finger; that stretch reads CACCNTFSETQVCSTC. A Toprim domain is found at 84–183; that stretch reads SLLCIVETPA…KVTRIARGIP (100 aa).

Belongs to the RecR family.

Functionally, may play a role in DNA repair. It seems to be involved in an RecBC-independent recombinational process of DNA repair. It may act with RecF and RecO. In Polynucleobacter necessarius subsp. necessarius (strain STIR1), this protein is Recombination protein RecR.